The chain runs to 188 residues: GTP cyclohydrolase 1 (188 aa).

Residues C78, H81, and C150 each contribute to the Zn(2+) site.

The protein belongs to the GTP cyclohydrolase I family. As to quaternary structure, toroid-shaped homodecamer, composed of two pentamers of five dimers.

The catalysed reaction is GTP + H2O = 7,8-dihydroneopterin 3'-triphosphate + formate + H(+). It participates in cofactor biosynthesis; 7,8-dihydroneopterin triphosphate biosynthesis; 7,8-dihydroneopterin triphosphate from GTP: step 1/1. This is GTP cyclohydrolase 1 from Geobacillus kaustophilus (strain HTA426).